A 773-amino-acid polypeptide reads, in one-letter code: DC-STAMP domain-containing protein 2 (773 aa).

The Cytoplasmic portion of the chain corresponds to M1–S26. The helical transmembrane segment at V27–V47 threads the bilayer. The Extracellular portion of the chain corresponds to E48–S51. A helical transmembrane segment spans residues P52–F72. Topologically, residues S73 to V233 are cytoplasmic. Residues L234–I254 form a helical membrane-spanning segment. Over P255–A322 the chain is Extracellular. 2 N-linked (GlcNAc...) asparagine glycosylation sites follow: N284 and N296. The chain crosses the membrane as a helical span at residues L323–F343. Over Y344–H415 the chain is Cytoplasmic. A helical transmembrane segment spans residues L416–A436. At R437–G499 the chain is on the extracellular side. N480 is a glycosylation site (N-linked (GlcNAc...) asparagine). A helical transmembrane segment spans residues Y500–V520. Residues S521 to K773 lie on the Cytoplasmic side of the membrane. Residues S692 to S701 are compositionally biased toward low complexity. Residues S692 to K773 are disordered. The segment covering P758 to K773 has biased composition (pro residues).

In terms of assembly, interacts with DCST1.

Its subcellular location is the cytoplasmic vesicle. It localises to the secretory vesicle. The protein resides in the acrosome membrane. Essential sperm cell-surface protein required for sperm-egg fusion and fertilization. The chain is DC-STAMP domain-containing protein 2 (DCST2) from Homo sapiens (Human).